Consider the following 119-residue polypeptide: Large ribosomal subunit protein bL20 (119 aa).

The protein belongs to the bacterial ribosomal protein bL20 family.

Binds directly to 23S ribosomal RNA and is necessary for the in vitro assembly process of the 50S ribosomal subunit. It is not involved in the protein synthesizing functions of that subunit. The polypeptide is Large ribosomal subunit protein bL20 (Shewanella halifaxensis (strain HAW-EB4)).